We begin with the raw amino-acid sequence, 290 residues long: uncharacterized protein (290 aa).

Belongs to the UreD family.

The protein localises to the cytoplasm. The protein resides in the nucleus. Its function is as follows. Probably facilitates nickel incorporation. This is an uncharacterized protein from Schizosaccharomyces pombe (strain 972 / ATCC 24843) (Fission yeast).